Reading from the N-terminus, the 617-residue chain is uncharacterized protein (617 aa).

Residues Ala10 to Val30 traverse the membrane as a helical segment. Residues Glu34–Gln58 are disordered. Residues Ser43–Ser53 are compositionally biased toward polar residues. Positions Val60–Thr86 form a coiled coil. Residues Met473–Phe493 form a helical membrane-spanning segment. Low complexity predominate over residues Ser511–Ser529. The tract at residues Ser511–Ser617 is disordered. Over residues Ser531–Arg543 the composition is skewed to basic and acidic residues. The span at Val563–Gln584 shows a compositional bias: polar residues. A compositionally biased stretch (gly residues) spans Gly590–Phe599.

It is found in the membrane. This is an uncharacterized protein from Arabidopsis thaliana (Mouse-ear cress).